The primary structure comprises 571 residues: 2-succinyl-5-enolpyruvyl-6-hydroxy-3-cyclohexene-1-carboxylate synthase (571 aa).

This sequence belongs to the TPP enzyme family. MenD subfamily. As to quaternary structure, homodimer. The cofactor is Mg(2+). Requires Mn(2+) as cofactor. Thiamine diphosphate is required as a cofactor.

The enzyme catalyses isochorismate + 2-oxoglutarate + H(+) = 5-enolpyruvoyl-6-hydroxy-2-succinyl-cyclohex-3-ene-1-carboxylate + CO2. The protein operates within quinol/quinone metabolism; 1,4-dihydroxy-2-naphthoate biosynthesis; 1,4-dihydroxy-2-naphthoate from chorismate: step 2/7. It participates in quinol/quinone metabolism; menaquinone biosynthesis. Its function is as follows. Catalyzes the thiamine diphosphate-dependent decarboxylation of 2-oxoglutarate and the subsequent addition of the resulting succinic semialdehyde-thiamine pyrophosphate anion to isochorismate to yield 2-succinyl-5-enolpyruvyl-6-hydroxy-3-cyclohexene-1-carboxylate (SEPHCHC). This Lysinibacillus sphaericus (strain C3-41) protein is 2-succinyl-5-enolpyruvyl-6-hydroxy-3-cyclohexene-1-carboxylate synthase.